We begin with the raw amino-acid sequence, 253 residues long: Ribulose bisphosphate carboxylase large chain (253 aa).

Substrate is bound by residues asparagine 35 and threonine 85. Residue lysine 87 is the Proton acceptor of the active site. A substrate-binding site is contributed by lysine 89. 3 residues coordinate Mg(2+): lysine 113, aspartate 115, and glutamate 116. Lysine 113 carries the post-translational modification N6-carboxylysine. Catalysis depends on histidine 206, which acts as the Proton acceptor. Substrate is bound by residues arginine 207 and histidine 239.

This sequence belongs to the RuBisCO large chain family. Type I subfamily. Heterohexadecamer of 8 large chains and 8 small chains; disulfide-linked. The disulfide link is formed within the large subunit homodimers. It depends on Mg(2+) as a cofactor. Post-translationally, the disulfide bond which can form in the large chain dimeric partners within the hexadecamer appears to be associated with oxidative stress and protein turnover.

The protein localises to the plastid. It is found in the chloroplast. It carries out the reaction 2 (2R)-3-phosphoglycerate + 2 H(+) = D-ribulose 1,5-bisphosphate + CO2 + H2O. The enzyme catalyses D-ribulose 1,5-bisphosphate + O2 = 2-phosphoglycolate + (2R)-3-phosphoglycerate + 2 H(+). Functionally, ruBisCO catalyzes two reactions: the carboxylation of D-ribulose 1,5-bisphosphate, the primary event in carbon dioxide fixation, as well as the oxidative fragmentation of the pentose substrate in the photorespiration process. Both reactions occur simultaneously and in competition at the same active site. The sequence is that of Ribulose bisphosphate carboxylase large chain (rbcL) from Magnolia latahensis (Apocynophyllum latahense).